Reading from the N-terminus, the 433-residue chain is Serine hydroxymethyltransferase (433 aa).

122–124 (AHV) serves as a coordination point for (6S)-5,6,7,8-tetrahydrofolate. An N6-(pyridoxal phosphate)lysine modification is found at K228.

It belongs to the SHMT family. In terms of assembly, homodimer. Pyridoxal 5'-phosphate is required as a cofactor.

Its subcellular location is the cytoplasm. It participates in amino-acid biosynthesis; glycine biosynthesis; glycine from L-serine: step 1/1. In terms of biological role, catalyzes the reversible interconversion of serine and glycine with a modified folate serving as the one-carbon carrier. Also exhibits a pteridine-independent aldolase activity toward beta-hydroxyamino acids, producing glycine and aldehydes, via a retro-aldol mechanism. The chain is Serine hydroxymethyltransferase from Sulfolobus acidocaldarius (strain ATCC 33909 / DSM 639 / JCM 8929 / NBRC 15157 / NCIMB 11770).